Here is a 355-residue protein sequence, read N- to C-terminus: MLADKLKPFLTRFDELNTLLSDVNISNDISKMTALSKEQKNLEPIVEKAKEYLKTLDDIEENKLLLSDPELGELAKEELKNLELLKPNLEEELKILLLPKDPNDDKNIFLEIRAGTGGDEASLFVGDLVKAYIRYAENRDYKYEIVSSSEGSVGGFKEIIILIKGNGAYSRLKYEGGTHRVQRVPETESQGRVHTSAITVAIMPEVDDVEIQINPNDLKIDVMRSSGHGGQSVNTTDSAVRITHIPTGIVVVNQDGKSQHKNKESAMKVLKARLFEMQEQERLAKESEARKSQVGSGDRSERIRTYNFPQNRISDHRINLTLYRLDAILEGGLFDEIVEPLIAYYQAEALKQENL.

The residue at position 231 (Gln231) is an N5-methylglutamine. The disordered stretch occupies residues 283–303 (LAKESEARKSQVGSGDRSERI).

Belongs to the prokaryotic/mitochondrial release factor family. In terms of processing, methylated by PrmC. Methylation increases the termination efficiency of RF1.

The protein resides in the cytoplasm. In terms of biological role, peptide chain release factor 1 directs the termination of translation in response to the peptide chain termination codons UAG and UAA. This Campylobacter lari (strain RM2100 / D67 / ATCC BAA-1060) protein is Peptide chain release factor 1.